The sequence spans 112 residues: 2Fe-2S ferredoxin (112 aa).

A 2Fe-2S ferredoxin-type domain is found at 5-107; the sequence is IKVTFIINDE…GIKVRLPSAT (103 aa). 4 residues coordinate [2Fe-2S] cluster: Cys-42, Cys-48, Cys-51, and Cys-88.

It belongs to the adrenodoxin/putidaredoxin family. The cofactor is [2Fe-2S] cluster.

In terms of biological role, ferredoxin are iron-sulfur proteins that transfer electrons in a wide variety of metabolic reactions. The chain is 2Fe-2S ferredoxin (fdxB) from Rickettsia prowazekii (strain Madrid E).